The chain runs to 138 residues: Large ribosomal subunit protein uL16 (138 aa).

Basic residues predominate over residues Met-1–Arg-14. The tract at residues Met-1 to Thr-24 is disordered. Residues Leu-15–Thr-24 show a composition bias toward basic and acidic residues.

Belongs to the universal ribosomal protein uL16 family. In terms of assembly, part of the 50S ribosomal subunit.

In terms of biological role, binds 23S rRNA and is also seen to make contacts with the A and possibly P site tRNAs. This is Large ribosomal subunit protein uL16 from Mycoplasma mobile (strain ATCC 43663 / 163K / NCTC 11711) (Mesomycoplasma mobile).